The following is an 898-amino-acid chain: Phosphoenolpyruvate carboxylase (898 aa).

Catalysis depends on residues histidine 138 and lysine 561.

The protein belongs to the PEPCase type 1 family. The cofactor is Mg(2+).

The enzyme catalyses oxaloacetate + phosphate = phosphoenolpyruvate + hydrogencarbonate. Forms oxaloacetate, a four-carbon dicarboxylic acid source for the tricarboxylic acid cycle. The chain is Phosphoenolpyruvate carboxylase from Streptococcus pneumoniae serotype 4 (strain ATCC BAA-334 / TIGR4).